We begin with the raw amino-acid sequence, 143 residues long: Sirohydrochlorin cobaltochelatase (143 aa).

His9 serves as the catalytic Proton acceptor. His9 provides a ligand contact to Co(2+). A Ni(2+)-binding site is contributed by His9. Substrate-binding positions include Glu45 and Leu70 to His75. His75 serves as a coordination point for Co(2+). His75 is a binding site for Ni(2+).

Belongs to the CbiX family. CbiXS subfamily. Homotetramer; dimer of dimers.

The catalysed reaction is Co-sirohydrochlorin + 2 H(+) = sirohydrochlorin + Co(2+). It carries out the reaction Ni-sirohydrochlorin + 2 H(+) = sirohydrochlorin + Ni(2+). The protein operates within cofactor biosynthesis; adenosylcobalamin biosynthesis; cob(II)yrinate a,c-diamide from sirohydrochlorin (anaerobic route): step 1/10. Its function is as follows. Catalyzes the insertion of Co(2+) into sirohydrochlorin as part of the anaerobic pathway to cobalamin biosynthesis. Involved in the biosynthesis of the unique nickel-containing tetrapyrrole coenzyme F430, the prosthetic group of methyl-coenzyme M reductase (MCR), which plays a key role in methanogenesis and anaerobic methane oxidation. Catalyzes the insertion of Ni(2+) into sirohydrochlorin to yield Ni-sirohydrochlorin. The polypeptide is Sirohydrochlorin cobaltochelatase (Methanopyrus kandleri (strain AV19 / DSM 6324 / JCM 9639 / NBRC 100938)).